The primary structure comprises 461 residues: UPF0210 protein LCABL_10110 (461 aa).

The protein belongs to the UPF0210 family. Homodimer.

The sequence is that of UPF0210 protein LCABL_10110 from Lacticaseibacillus casei (strain BL23) (Lactobacillus casei).